The sequence spans 417 residues: Serine hydroxymethyltransferase (417 aa).

Residues leucine 117 and 121–123 contribute to the (6S)-5,6,7,8-tetrahydrofolate site; that span reads GHL. Lysine 226 carries the post-translational modification N6-(pyridoxal phosphate)lysine.

This sequence belongs to the SHMT family. As to quaternary structure, homodimer. The cofactor is pyridoxal 5'-phosphate.

The protein localises to the cytoplasm. It catalyses the reaction (6R)-5,10-methylene-5,6,7,8-tetrahydrofolate + glycine + H2O = (6S)-5,6,7,8-tetrahydrofolate + L-serine. It participates in one-carbon metabolism; tetrahydrofolate interconversion. It functions in the pathway amino-acid biosynthesis; glycine biosynthesis; glycine from L-serine: step 1/1. In terms of biological role, catalyzes the reversible interconversion of serine and glycine with tetrahydrofolate (THF) serving as the one-carbon carrier. This reaction serves as the major source of one-carbon groups required for the biosynthesis of purines, thymidylate, methionine, and other important biomolecules. Also exhibits THF-independent aldolase activity toward beta-hydroxyamino acids, producing glycine and aldehydes, via a retro-aldol mechanism. This is Serine hydroxymethyltransferase from Shouchella clausii (strain KSM-K16) (Alkalihalobacillus clausii).